An 886-amino-acid polypeptide reads, in one-letter code: Phosphatidylinositol 3-kinase catalytic subunit type 3 (886 aa).

Residues tyrosine 35 to glutamine 184 enclose the C2 PI3K-type domain. Positions aspartate 283–valine 519 constitute a PIK helical domain. The segment at glycine 414–glycine 464 is disordered. Residues serine 429–isoleucine 444 show a composition bias toward polar residues. Residues leucine 445–serine 454 show a composition bias toward low complexity. The PI3K/PI4K catalytic domain maps to isoleucine 604–phenylalanine 870. Residues leucine 610 to methionine 616 are G-loop. Positions glycine 739 to asparagine 747 are catalytic loop. The activation loop stretch occupies residues histidine 758–asparagine 779.

This sequence belongs to the PI3/PI4-kinase family. Component of the PI3K (PI3KC3/PI3K-III/class III phosphatidylinositol 3-kinase) complex the core of which is composed of the catalytic subunit pik3c3, the regulatory subunit pik3r4 and becn1 associating with additional regulatory/auxiliary subunits to form alternative complex forms. The cofactor is Mn(2+).

The protein localises to the midbody. It catalyses the reaction a 1,2-diacyl-sn-glycero-3-phospho-(1D-myo-inositol) + ATP = a 1,2-diacyl-sn-glycero-3-phospho-(1D-myo-inositol-3-phosphate) + ADP + H(+). Catalytic subunit of the PI3K complex that mediates formation of phosphatidylinositol 3-phosphate; different complex forms are believed to play a role in multiple membrane trafficking pathways. Involved in the transport of lysosomal enzyme precursors to lysosomes. Required for transport from early to late endosomes. This Xenopus laevis (African clawed frog) protein is Phosphatidylinositol 3-kinase catalytic subunit type 3 (pik3c3).